We begin with the raw amino-acid sequence, 460 residues long: tRNA modification GTPase MnmE (460 aa).

3 residues coordinate (6S)-5-formyl-5,6,7,8-tetrahydrofolate: Arg-22, Glu-87, and Arg-126. The TrmE-type G domain occupies 222–381 (GLKTAIIGKP…LENTIYNLVF (160 aa)). K(+) is bound at residue Asn-232. GTP-binding positions include 232 to 237 (NVGKSS), 251 to 257 (TDIPGTT), and 276 to 279 (DTAG). Ser-236 serves as a coordination point for Mg(2+). K(+) is bound by residues Thr-251, Ile-253, and Thr-256. Position 257 (Thr-257) interacts with Mg(2+). Lys-460 is a (6S)-5-formyl-5,6,7,8-tetrahydrofolate binding site.

This sequence belongs to the TRAFAC class TrmE-Era-EngA-EngB-Septin-like GTPase superfamily. TrmE GTPase family. Homodimer. Heterotetramer of two MnmE and two MnmG subunits. K(+) serves as cofactor.

It is found in the cytoplasm. In terms of biological role, exhibits a very high intrinsic GTPase hydrolysis rate. Involved in the addition of a carboxymethylaminomethyl (cmnm) group at the wobble position (U34) of certain tRNAs, forming tRNA-cmnm(5)s(2)U34. In Thermoanaerobacter pseudethanolicus (strain ATCC 33223 / 39E) (Clostridium thermohydrosulfuricum), this protein is tRNA modification GTPase MnmE.